A 150-amino-acid chain; its full sequence is Putative transmembrane protein DDB_G0277665 (150 aa).

The next 2 membrane-spanning stretches (helical) occupy residues 4 to 24 and 42 to 62; these read TLII…FNIL and VIVG…FLPL.

It is found in the membrane. The chain is Putative transmembrane protein DDB_G0277665 from Dictyostelium discoideum (Social amoeba).